A 239-amino-acid chain; its full sequence is Ribosomal RNA small subunit methyltransferase G (239 aa).

Residues G78, F83, 129–130, and R148 each bind S-adenosyl-L-methionine; that span reads AE.

This sequence belongs to the methyltransferase superfamily. RNA methyltransferase RsmG family.

The protein localises to the cytoplasm. Specifically methylates the N7 position of a guanine in 16S rRNA. This Desulfitobacterium hafniense (strain Y51) protein is Ribosomal RNA small subunit methyltransferase G.